The chain runs to 36 residues: Toxin Iob1 (36 aa).

Intrachain disulfides connect C6–C21, C13–C26, and C20–C33.

The protein resides in the secreted. Functionally, binds reversibly and blocks N-type voltage-gated calcium channels (Cav). The sequence is that of Toxin Iob1 from Isyndus obscurus (Assassin bug).